The primary structure comprises 506 residues: Maturase K (506 aa).

The protein belongs to the intron maturase 2 family. MatK subfamily.

It localises to the plastid. The protein resides in the chloroplast. In terms of biological role, usually encoded in the trnK tRNA gene intron. Probably assists in splicing its own and other chloroplast group II introns. The polypeptide is Maturase K (Trifolium spumosum (Mediterranean clover)).